A 532-amino-acid polypeptide reads, in one-letter code: FRIGIDA-like protein 4b (532 aa).

This sequence belongs to the Frigida family. In terms of tissue distribution, expressed in leaves, shoot apex, flowers and during seed development.

This is FRIGIDA-like protein 4b (FRL4B) from Arabidopsis thaliana (Mouse-ear cress).